The sequence spans 27 residues: Peptide Cn29 (27 aa).

3 disulfides stabilise this stretch: C2/C23, C5/C18, and C12/C25.

In terms of tissue distribution, expressed by the venom gland.

It localises to the secreted. The protein is Peptide Cn29 of Centruroides noxius (Mexican scorpion).